We begin with the raw amino-acid sequence, 155 residues long: Large ribosomal subunit protein uL30 (155 aa).

The protein belongs to the universal ribosomal protein uL30 family. In terms of assembly, part of the 50S ribosomal subunit.

In Nanoarchaeum equitans (strain Kin4-M), this protein is Large ribosomal subunit protein uL30.